Here is a 399-residue protein sequence, read N- to C-terminus: 1-deoxy-D-xylulose 5-phosphate reductoisomerase (399 aa).

Positions 11, 12, 13, 14, and 125 each coordinate NADPH. 1-deoxy-D-xylulose 5-phosphate is bound at residue lysine 126. Glutamate 127 contributes to the NADPH binding site. A Mn(2+)-binding site is contributed by aspartate 151. 4 residues coordinate 1-deoxy-D-xylulose 5-phosphate: serine 152, glutamate 153, serine 186, and histidine 209. Residue glutamate 153 participates in Mn(2+) binding. Residue glycine 215 coordinates NADPH. Residues serine 222, asparagine 227, lysine 228, and glutamate 231 each contribute to the 1-deoxy-D-xylulose 5-phosphate site. Residue glutamate 231 participates in Mn(2+) binding.

It belongs to the DXR family. Requires Mg(2+) as cofactor. The cofactor is Mn(2+).

It carries out the reaction 2-C-methyl-D-erythritol 4-phosphate + NADP(+) = 1-deoxy-D-xylulose 5-phosphate + NADPH + H(+). Its pathway is isoprenoid biosynthesis; isopentenyl diphosphate biosynthesis via DXP pathway; isopentenyl diphosphate from 1-deoxy-D-xylulose 5-phosphate: step 1/6. Catalyzes the NADPH-dependent rearrangement and reduction of 1-deoxy-D-xylulose-5-phosphate (DXP) to 2-C-methyl-D-erythritol 4-phosphate (MEP). This chain is 1-deoxy-D-xylulose 5-phosphate reductoisomerase, found in Acinetobacter baumannii (strain SDF).